A 454-amino-acid chain; its full sequence is Chromosomal replication initiator protein DnaA (454 aa).

The domain I, interacts with DnaA modulators stretch occupies residues 1-77 (MASLNENQKF…GFEVFGRMID (77 aa)). The segment at 77-115 (DYELYANDELTDIELRRLNNQSPVDEPLSVAKPTSPLVS) is domain II. Residues 116 to 332 (GLNEKYNFEN…GALNRVEFVA (217 aa)) form a domain III, AAA+ region region. G160, G162, K163, and T164 together coordinate ATP. Residues 333-454 (RANGISIVDI…KDIDSIKRKF (122 aa)) form a domain IV, binds dsDNA region.

Belongs to the DnaA family. In terms of assembly, oligomerizes as a right-handed, spiral filament on DNA at oriC.

The protein localises to the cytoplasm. Functionally, plays an essential role in the initiation and regulation of chromosomal replication. ATP-DnaA binds to the origin of replication (oriC) to initiate formation of the DNA replication initiation complex once per cell cycle. Binds the DnaA box (a 9 base pair repeat at the origin) and separates the double-stranded (ds)DNA. Forms a right-handed helical filament on oriC DNA; dsDNA binds to the exterior of the filament while single-stranded (ss)DNA is stabiized in the filament's interior. The ATP-DnaA-oriC complex binds and stabilizes one strand of the AT-rich DNA unwinding element (DUE), permitting loading of DNA polymerase. After initiation quickly degrades to an ADP-DnaA complex that is not apt for DNA replication. Binds acidic phospholipids. This chain is Chromosomal replication initiator protein DnaA, found in Lactococcus lactis subsp. cremoris (strain MG1363).